Consider the following 287-residue polypeptide: Formamidopyrimidine-DNA glycosylase (287 aa).

Pro2 (schiff-base intermediate with DNA) is an active-site residue. Catalysis depends on Glu3, which acts as the Proton donor. The Proton donor; for beta-elimination activity role is filled by Lys58. DNA-binding residues include His104, Arg123, and Arg166. An FPG-type zinc finger spans residues 251 to 287 (RVYDREGQPCPTPGCKGMIGREVQAGRSTFFCPVCQV). The active-site Proton donor; for delta-elimination activity is the Arg277.

Belongs to the FPG family. In terms of assembly, monomer. Zn(2+) serves as cofactor.

It carries out the reaction Hydrolysis of DNA containing ring-opened 7-methylguanine residues, releasing 2,6-diamino-4-hydroxy-5-(N-methyl)formamidopyrimidine.. The catalysed reaction is 2'-deoxyribonucleotide-(2'-deoxyribose 5'-phosphate)-2'-deoxyribonucleotide-DNA = a 3'-end 2'-deoxyribonucleotide-(2,3-dehydro-2,3-deoxyribose 5'-phosphate)-DNA + a 5'-end 5'-phospho-2'-deoxyribonucleoside-DNA + H(+). Its function is as follows. Involved in base excision repair of DNA damaged by oxidation or by mutagenic agents. Acts as a DNA glycosylase that recognizes and removes damaged bases. Has a preference for oxidized purines, such as 7,8-dihydro-8-oxoguanine (8-oxoG). Has AP (apurinic/apyrimidinic) lyase activity and introduces nicks in the DNA strand. Cleaves the DNA backbone by beta-delta elimination to generate a single-strand break at the site of the removed base with both 3'- and 5'-phosphates. The protein is Formamidopyrimidine-DNA glycosylase of Caulobacter sp. (strain K31).